Reading from the N-terminus, the 709-residue chain is Molybdenum cofactor sulfurase (709 aa).

An N6-(pyridoxal phosphate)lysine modification is found at K208. C367 is an active-site residue. Positions 563-707 (DNALDRQNCR…LESGMSVNFS (145 aa)) constitute an MOSC domain.

It belongs to the class-V pyridoxal-phosphate-dependent aminotransferase family. MOCOS subfamily. Pyridoxal 5'-phosphate is required as a cofactor.

It carries out the reaction Mo-molybdopterin + L-cysteine + AH2 = thio-Mo-molybdopterin + L-alanine + A + H2O. It participates in cofactor biosynthesis; molybdopterin biosynthesis. Its function is as follows. Sulfurates the molybdenum cofactor. Sulfation of molybdenum is essential for xanthine dehydrogenase (XDH) and aldehyde oxidase (ADO) enzymes in which molybdenum cofactor is liganded by 1 oxygen and 1 sulfur atom in active form. The sequence is that of Molybdenum cofactor sulfurase from Caenorhabditis elegans.